The primary structure comprises 147 residues: Ribosome-binding factor A (147 aa).

The disordered stretch occupies residues 126 to 147 (LKKNAQPAGDAHPYKDDDAMND). The span at 137-147 (HPYKDDDAMND) shows a compositional bias: basic and acidic residues.

This sequence belongs to the RbfA family. In terms of assembly, monomer. Binds 30S ribosomal subunits, but not 50S ribosomal subunits or 70S ribosomes.

It localises to the cytoplasm. One of several proteins that assist in the late maturation steps of the functional core of the 30S ribosomal subunit. Associates with free 30S ribosomal subunits (but not with 30S subunits that are part of 70S ribosomes or polysomes). Required for efficient processing of 16S rRNA. May interact with the 5'-terminal helix region of 16S rRNA. The chain is Ribosome-binding factor A from Corynebacterium diphtheriae (strain ATCC 700971 / NCTC 13129 / Biotype gravis).